The following is a 720-amino-acid chain: Engulfment and cell motility protein 3 (720 aa).

In terms of domain architecture, ELMO spans 307–479 (EQREQLQALR…VVREQLARTL (173 aa)). One can recognise a PH domain in the interval 541 to 663 (LRLCEGMLFR…WTDGLSALLG (123 aa)).

As to quaternary structure, probably interacts directly with the SH3-domain of DOCK1 via its SH3-binding site. Part of a complex with DOCK1 and RAC1. Interacts with ADGRB3.

The protein resides in the cytoplasm. In terms of biological role, involved in cytoskeletal rearrangements required for phagocytosis of apoptotic cells and cell motility. Acts in association with DOCK1 and CRK. Was initially proposed to be required in complex with DOCK1 to activate Rac Rho small GTPases. May enhance the guanine nucleotide exchange factor (GEF) activity of DOCK1. This chain is Engulfment and cell motility protein 3 (Elmo3), found in Rattus norvegicus (Rat).